A 489-amino-acid polypeptide reads, in one-letter code: CUGBP Elav-like family member 1-A (489 aa).

3 RRM domains span residues 16-99 (IKMF…PADS), 108-188 (RKLF…FADT), and 404-482 (ANLF…LKRS). The tract at residues 183–210 (VKFADTQKDKEQKRMTQQLQQQMQQLNA) is necessary for oligomerization and EDEN-dependent deadenylation.

This sequence belongs to the CELF/BRUNOL family. In terms of assembly, oligomer. Oligomerization is required for RNA-binding and EDEN-dependent deadenylation. Post-translationally, phosphorylated during oocyte maturation and dephosphorylated following egg activation. Dephosphorylation is calcium dependent and correlates with the increase in the activity of EDEN-dependent deadenylation.

The protein localises to the nucleus. Its subcellular location is the cytoplasm. Its function is as follows. RNA-binding protein implicated in the regulation of several post-transcriptional events. May be involved in pre-mRNA alternative splicing, mRNA translation activation and stability. Mediates the rapid and sequence-specific cytoplasmic deadenylation of EDEN-containing maternal mRNAs following fertilization. Binds to AU-rich sequences (AREs) of jun mRNA. Binds to the embryonic deadenylation element (EDEN) motif localized in the 3'-UTR of maternal mRNAs. Binds to RNA containing several repeats of the consensus sequence 5'-UGU-3'. EDEN-dependent deadenylation is enhanced by the presence of an additional cis element composed of three AUU repeats. The chain is CUGBP Elav-like family member 1-A (cugbp1-a) from Xenopus laevis (African clawed frog).